Consider the following 319-residue polypeptide: Olfactory receptor 51F1 (319 aa).

At 1 to 37 (MLQNQDTMEILSNSTSKFPTFLLTGIPGLESAHVWIS) the chain is on the extracellular side. Residues 38–58 (IPFCCFYAIALSGNSVILFVI) traverse the membrane as a helical segment. The Cytoplasmic segment spans residues 59–75 (ITQQSLHEPMYYFLFRL). The chain crosses the membrane as a helical span at residues 76 to 96 (SATDLGLTVSSLSTTLGILWF). Residues 97–106 (EAREISLYSC) lie on the Extracellular side of the membrane. Cys106 and Cys188 are disulfide-bonded. Residues 107–127 (IVQMFFLHGFTFMESGVLVAT) traverse the membrane as a helical segment. The Cytoplasmic portion of the chain corresponds to 128-149 (AFDRYVAICDPLRYTTILTNSR). The chain crosses the membrane as a helical span at residues 150–170 (IIQMGLLMITRAIVLILPLLL). Topologically, residues 171-211 (LLKPLYFCRMNALSHSYCYHPDVIQLACSDIRANSICGLID) are extracellular. The helical transmembrane segment at 212–232 (LILTTGIDTPCIVLSYILIIH) threads the bilayer. Residues 233–249 (SVLRIASPEEWHKVFST) are Cytoplasmic-facing. A helical transmembrane segment spans residues 250-270 (CVSHVGAVAFFYIHMLSLSLV). Residues 271-279 (YRYGRSAPR) are Extracellular-facing. Residues 280 to 300 (VVHSVMANVYLLLPPVLNPII) traverse the membrane as a helical segment. Over 301–319 (DSVKTKQIRKAMLSLLLTK) the chain is Cytoplasmic.

It belongs to the G-protein coupled receptor 1 family.

It is found in the cell membrane. Functionally, odorant receptor. The chain is Olfactory receptor 51F1 (OR51F1) from Homo sapiens (Human).